The primary structure comprises 211 residues: MWSVTGALTVAVPPTAAACRTKPFLISSSFPKQTKKLHLSSPSLSLPSSHFSSSFKTAATSIEQQSSVNKGESTKYHFLVANAKFMLDEEEHFQEQLFERLRYFGERELVQDFWLVIEPKFLDNFPKITQRLRRPAVALVSTNGTWITFMKLRLDRVLYDSFEATSLDEALASNPTTLEFDKPKNWVAPYPKYEPGWWDTFLPKVTQESAV.

The N-terminal 80 residues, 1–80 (MWSVTGALTV…GESTKYHFLV (80 aa)), are a transit peptide targeting the chloroplast.

Belongs to the ycf54 family. Interacts with LFNR1 and CRD1/CHL27 in chloroplasts.

Its subcellular location is the plastid. The protein resides in the chloroplast. Involved in the biosynthesis of chlorophyll; acts probably as a scaffolding factor in the MgProto monomethylester (MgProtoME) cyclase complex to stabilize CRD1/CHL27, the catalytic subunit which catalyzes the formation of a fifth isocyclic ring to tetrapyrroles to form protochlorophyllide. In Arabidopsis thaliana (Mouse-ear cress), this protein is Protein YCF54, chloroplastic.